Reading from the N-terminus, the 588-residue chain is Sperm-associated microtubule inner protein 4 (588 aa).

Threonine 219 is subject to Phosphothreonine. A phosphoserine mark is found at serine 406, serine 421, and serine 427. Tyrosine 441 carries the phosphotyrosine modification. Serine 457, serine 484, and serine 516 each carry phosphoserine.

In terms of tissue distribution, predominantly expressed in the testes.

The protein resides in the cytoplasm. It localises to the cytoskeleton. The protein localises to the microtubule organizing center. Its subcellular location is the centrosome. It is found in the flagellum axoneme. In terms of biological role, microtubule inner protein (MIP) part of the dynein-decorated doublet microtubules (DMTs) in flagellum axoneme. May serve to reinforce and thus stabilize the microtubule structure in the sperm flagella. This chain is Sperm-associated microtubule inner protein 4 (Spmip4), found in Mus musculus (Mouse).